A 515-amino-acid chain; its full sequence is Fatty acyl-CoA reductase 1 (515 aa).

Over 1–465 (MVSIPEYYEG…ARKHLNKLRN (465 aa)) the chain is Cytoplasmic. Residues 466 to 483 (IRYGFNTILVILIWRIFI) traverse the membrane as a helical segment. At 484–515 (ARSQMARNIWYFVVSLCYKFLSYFRASSTMRY) the chain is on the peroxisomal side.

This sequence belongs to the fatty acyl-CoA reductase family.

The protein localises to the peroxisome membrane. It carries out the reaction a long-chain fatty acyl-CoA + 2 NADPH + 2 H(+) = a long-chain primary fatty alcohol + 2 NADP(+) + CoA. The catalysed reaction is hexadecanoyl-CoA + 2 NADPH + 2 H(+) = hexadecan-1-ol + 2 NADP(+) + CoA. It catalyses the reaction octadecanoyl-CoA + 2 NADPH + 2 H(+) = octadecan-1-ol + 2 NADP(+) + CoA. The enzyme catalyses (9Z)-octadecenoyl-CoA + 2 NADPH + 2 H(+) = (9Z)-octadecen-1-ol + 2 NADP(+) + CoA. It carries out the reaction (9Z,12Z)-octadecadienoyl-CoA + 2 NADPH + 2 H(+) = (9Z,12Z)-octadecadien-1-ol + 2 NADP(+) + CoA. The catalysed reaction is eicosanoyl-CoA + 2 NADPH + 2 H(+) = eicosan-1-ol + 2 NADP(+) + CoA. It catalyses the reaction 16-methylheptadecanoyl-CoA + 2 NADPH + 2 H(+) = 16-methylheptadecan-1-ol + 2 NADP(+) + CoA. The enzyme catalyses 18-methylnonadecanoyl-CoA + 2 NADPH + 2 H(+) = 18-methylnonadecan-1-ol + 2 NADP(+) + CoA. In terms of biological role, catalyzes the reduction of saturated and unsaturated C16 or C18 fatty acyl-CoA to fatty alcohols. It plays an essential role in the production of ether lipids/plasmalogens which synthesis requires fatty alcohols. In parallel, it is also required for wax monoesters production since fatty alcohols also constitute a substrate for their synthesis. This chain is Fatty acyl-CoA reductase 1, found in Gallus gallus (Chicken).